We begin with the raw amino-acid sequence, 39 residues long: AVDAKLLDMLKANGQISASQYTELQAELAKDQKEKQIAQ.

It is found in the cell outer membrane. This is Phosphate starvation-inducible protein 1 from Pseudomonas fluorescens.